The sequence spans 273 residues: Ribosomal RNA small subunit methyltransferase A (273 aa).

6 residues coordinate S-adenosyl-L-methionine: asparagine 18, leucine 20, glycine 45, glutamate 66, aspartate 91, and asparagine 113.

It belongs to the class I-like SAM-binding methyltransferase superfamily. rRNA adenine N(6)-methyltransferase family. RsmA subfamily.

It is found in the cytoplasm. The catalysed reaction is adenosine(1518)/adenosine(1519) in 16S rRNA + 4 S-adenosyl-L-methionine = N(6)-dimethyladenosine(1518)/N(6)-dimethyladenosine(1519) in 16S rRNA + 4 S-adenosyl-L-homocysteine + 4 H(+). In terms of biological role, specifically dimethylates two adjacent adenosines (A1518 and A1519) in the loop of a conserved hairpin near the 3'-end of 16S rRNA in the 30S particle. May play a critical role in biogenesis of 30S subunits. The polypeptide is Ribosomal RNA small subunit methyltransferase A (Salmonella typhimurium (strain LT2 / SGSC1412 / ATCC 700720)).